We begin with the raw amino-acid sequence, 84 residues long: Small ribosomal subunit protein eS27 (84 aa).

A C4-type zinc finger spans residues 38-60; sequence CPKCGATTTTFSHAHRQILCQKC.

Belongs to the eukaryotic ribosomal protein eS27 family. In terms of assembly, component of the small ribosomal subunit. The cofactor is Zn(2+).

It is found in the cytoplasm. Functionally, component of the small ribosomal subunit. The ribosome is a large ribonucleoprotein complex responsible for the synthesis of proteins in the cell. Required for proper rRNA processing and maturation of 18S rRNAs. The chain is Small ribosomal subunit protein eS27 (RPS27) from Entamoeba histolytica (strain ATCC 30459 / HM-1:IMSS / ABRM).